A 1029-amino-acid polypeptide reads, in one-letter code: Eukaryotic translation initiation factor 3 subunit A (1029 aa).

A coiled-coil region spans residues 92-121 (LKKFIELAEQKVTEAQAKADEIQSSLESAA). Positions 339 to 523 (MTKAASFVLL…GVLTFESDIF (185 aa)) constitute a PCI domain. A coiled-coil region spans residues 606-903 (TRRAIIEKRK…EEEAEQRRAA (298 aa)). 4 stretches are compositionally biased toward basic and acidic residues: residues 621-632 (ALQKKQREEENR), 644-666 (EQQRLLDEHRERERKRMKDEQDR), 797-901 (TEKR…EQRR), and 913-924 (GPAREASPERTA). Disordered stretches follow at residues 621-666 (ALQK…EQDR) and 797-1029 (TEKR…KQQQ). Residues 943-960 (AKAAASAGEQPAAAQEAT) show a composition bias toward low complexity. The segment covering 977–993 (ATRDGPSDSRDLSHARE) has biased composition (basic and acidic residues).

It belongs to the eIF-3 subunit A family. Component of the eukaryotic translation initiation factor 3 (eIF-3) complex.

It is found in the cytoplasm. Functionally, RNA-binding component of the eukaryotic translation initiation factor 3 (eIF-3) complex, which is involved in protein synthesis of a specialized repertoire of mRNAs and, together with other initiation factors, stimulates binding of mRNA and methionyl-tRNAi to the 40S ribosome. The eIF-3 complex specifically targets and initiates translation of a subset of mRNAs involved in cell proliferation. This is Eukaryotic translation initiation factor 3 subunit A from Coccidioides immitis (strain RS) (Valley fever fungus).